The chain runs to 300 residues: Bidirectional sugar transporter SWEET12 (300 aa).

The Extracellular segment spans residues 1–4; that stretch reads MVQA. A helical membrane pass occupies residues 5–25; the sequence is LVFAVGIVGNILSFLVILAPV. The region spanning 8–92 is the MtN3/slv 1 domain; that stretch reads AVGIVGNILS…TVYLLYAPRQ (85 aa). The Cytoplasmic portion of the chain corresponds to 26–38; the sequence is PTFYRVYKKKSTE. The helical transmembrane segment at 39–61 threads the bilayer; the sequence is SFQSVPYAVALLSAMLWLYYALL. The Extracellular portion of the chain corresponds to 62–67; the sequence is TSDLLL. Residues 68–88 form a helical membrane-spanning segment; it reads LSINSIGCLVESLYLTVYLLY. At 89–99 the chain is on the cytoplasmic side; the sequence is APRQAMAFTLK. A helical transmembrane segment spans residues 100-120; that stretch reads LVCAMNLALFAAVVAALQLLV. The Extracellular portion of the chain corresponds to 121-128; it reads KATDRRVT. Residues 129–149 traverse the membrane as a helical segment; the sequence is LAGGIGASFALAVFVAPLTII. The MtN3/slv 2 domain maps to 131–213; sequence GGIGASFALA…VLYVVYKNPK (83 aa). Over 150-162 the chain is Cytoplasmic; it reads RQVIRTKSVEFMP. A helical membrane pass occupies residues 163-183; the sequence is FWLSFFLTLSAVVWFFYGLLM. The Extracellular segment spans residues 184–185; it reads KD. Residues 186–206 form a helical membrane-spanning segment; that stretch reads FFVATPNVLGLLFGLAQMVLY. Topologically, residues 207-300 are cytoplasmic; the sequence is VVYKNPKKNS…PPALPAVEVA (94 aa). The interval 256-300 is disordered; the sequence is ADLEAAAPATPQRPADDDAIDHRSVVVDIPPPPQPPPALPAVEVA. Residues 269–280 are compositionally biased toward basic and acidic residues; the sequence is PADDDAIDHRSV. Pro residues predominate over residues 284–294; sequence IPPPPQPPPAL.

It belongs to the SWEET sugar transporter family. In terms of assembly, forms homooligomers and/or heterooligomers.

The protein resides in the cell membrane. Its function is as follows. Mediates both low-affinity uptake and efflux of sugar across the plasma membrane. In terms of biological role, confers blight susceptibility. Confers TAL effector-mediated susceptibility to Xanthomonas oryzae pv. oryzae. This chain is Bidirectional sugar transporter SWEET12 (SWEET12), found in Oryza sativa subsp. japonica (Rice).